The chain runs to 705 residues: Ribosomal RNA large subunit methyltransferase K/L (705 aa).

The THUMP domain maps to 43-154; it reads LMYQSLMWSR…KDTASIALDL (112 aa).

Belongs to the methyltransferase superfamily. RlmKL family.

The protein resides in the cytoplasm. It catalyses the reaction guanosine(2445) in 23S rRNA + S-adenosyl-L-methionine = N(2)-methylguanosine(2445) in 23S rRNA + S-adenosyl-L-homocysteine + H(+). The catalysed reaction is guanosine(2069) in 23S rRNA + S-adenosyl-L-methionine = N(2)-methylguanosine(2069) in 23S rRNA + S-adenosyl-L-homocysteine + H(+). Its function is as follows. Specifically methylates the guanine in position 2445 (m2G2445) and the guanine in position 2069 (m7G2069) of 23S rRNA. This chain is Ribosomal RNA large subunit methyltransferase K/L, found in Erwinia tasmaniensis (strain DSM 17950 / CFBP 7177 / CIP 109463 / NCPPB 4357 / Et1/99).